The sequence spans 370 residues: Early nodulin-like protein 1 (370 aa).

Positions 1 to 27 are cleaved as a signal peptide; it reads MSAIMKSLCFSFLILASFATFFSVADA. The 102-residue stretch at 28–129 folds into the Phytocyanin domain; the sequence is WRFNVGGNGA…GQKLIVVVLA (102 aa). Asparagine 58 carries N-linked (GlcNAc...) asparagine glycosylation. Cysteine 83 and cysteine 117 are joined by a disulfide. Positions 135 to 175 are enriched in low complexity; the sequence is SAPAHSPVPSVSPTQPPKSHSPVSPVAPASAPSKSQPPRSS. The tract at residues 135-347 is disordered; that stretch reads SAPAHSPVPS…PAPSPRTNSA (213 aa). Polar residues predominate over residues 176–194; the sequence is VSPAQPPKSSSPISHTPAL. Low complexity-rich tracts occupy residues 195–205 and 215–290; these read SPSHATSHSPA and SPVS…QSPA. Over residues 291–305 the composition is skewed to pro residues; the sequence is TPSPMTPQSPSPVSS. Over residues 306-318 the composition is skewed to low complexity; sequence PSPDQSAAPSDQS. Polar residues predominate over residues 319–334; the sequence is TPLAPSPSETTPTADN. N-linked (GlcNAc...) asparagine glycosylation is present at asparagine 334. The GPI-anchor amidated asparagine moiety is linked to residue asparagine 345. Positions 346 to 370 are cleaved as a propeptide — removed in mature form; the sequence is SASGLAVTSVMSTLFSATFTFLMFA.

The protein belongs to the early nodulin-like (ENODL) family. Mostly expressed in stems, leaves and flowers, and, to a lower extent, in seedlings, roots and seeds.

The protein resides in the cell membrane. Functionally, may act as a carbohydrate transporter. In Arabidopsis thaliana (Mouse-ear cress), this protein is Early nodulin-like protein 1.